We begin with the raw amino-acid sequence, 252 residues long: Imidazole glycerol phosphate synthase subunit HisF (252 aa).

Residues D11 and D130 contribute to the active site.

This sequence belongs to the HisA/HisF family. In terms of assembly, heterodimer of HisH and HisF.

It localises to the cytoplasm. It carries out the reaction 5-[(5-phospho-1-deoxy-D-ribulos-1-ylimino)methylamino]-1-(5-phospho-beta-D-ribosyl)imidazole-4-carboxamide + L-glutamine = D-erythro-1-(imidazol-4-yl)glycerol 3-phosphate + 5-amino-1-(5-phospho-beta-D-ribosyl)imidazole-4-carboxamide + L-glutamate + H(+). It functions in the pathway amino-acid biosynthesis; L-histidine biosynthesis; L-histidine from 5-phospho-alpha-D-ribose 1-diphosphate: step 5/9. IGPS catalyzes the conversion of PRFAR and glutamine to IGP, AICAR and glutamate. The HisF subunit catalyzes the cyclization activity that produces IGP and AICAR from PRFAR using the ammonia provided by the HisH subunit. In Staphylococcus epidermidis (strain ATCC 12228 / FDA PCI 1200), this protein is Imidazole glycerol phosphate synthase subunit HisF.